The primary structure comprises 377 residues: Protein RecA (377 aa).

G82 to T89 lines the ATP pocket. The tract at residues E345–G377 is disordered. A compositionally biased stretch (polar residues) spans R362–G377.

The protein belongs to the RecA family.

The protein resides in the cytoplasm. In terms of biological role, can catalyze the hydrolysis of ATP in the presence of single-stranded DNA, the ATP-dependent uptake of single-stranded DNA by duplex DNA, and the ATP-dependent hybridization of homologous single-stranded DNAs. It interacts with LexA causing its activation and leading to its autocatalytic cleavage. This Prochlorococcus marinus (strain NATL2A) protein is Protein RecA.